The sequence spans 530 residues: DNA damage-binding protein cmr1 (530 aa).

Disordered regions lie at residues 34-115 (VGLF…RKSD) and 224-250 (TKPVSAATHDEDEEDDDDDPDPVLTTL). Over residues 52-62 (AKKKKPAPKKV) the composition is skewed to basic residues. Residues 89 to 108 (EVAKRKADEHDAALQEAERA) show a composition bias toward basic and acidic residues. The stretch at 188–229 (LTPERIYAMTFHPSESKPLIFAGDKMGHLGVLDASQTKPVSA) is one WD 1 repeat. Residues 233–244 (DEDEEDDDDDPD) show a composition bias toward acidic residues. 6 WD repeats span residues 252 to 292 (PHTR…SVER), 302 to 339 (VPISGLDMALDDPHCLYWTTLDGEFGRYDMRTPRQDSA), 344 to 384 (LSDK…HKSP), 389 to 430 (EHES…ASWK), 453 to 496 (GRWV…LAQL), and 499 to 530 (DGITAVPAVAVFHRSKNWVAGGTASGKICLWM).

Belongs to the WD repeat DDB2/WDR76 family.

Its function is as follows. DNA-binding protein that binds to both single- and double-stranded DNA. Binds preferentially to UV-damaged DNA. May be involved in DNA-metabolic processes. This chain is DNA damage-binding protein cmr1, found in Aspergillus terreus (strain NIH 2624 / FGSC A1156).